The primary structure comprises 301 residues: Ubiquinone biosynthesis protein COQ4, mitochondrial (301 aa).

A mitochondrion-targeting transit peptide spans 1-46; it reads MEVTLKRSAALARQTTPLLRPLRPVATYPSNNNNNNNPTPQQRRPY. The segment at 14–48 is disordered; the sequence is QTTPLLRPLRPVATYPSNNNNNNNPTPQQRRPYSL. Residues 38 to 48 show a composition bias toward polar residues; the sequence is PTPQQRRPYSL. Residues H185, D186, H189, and E201 each contribute to the Zn(2+) site.

This sequence belongs to the COQ4 family. As to quaternary structure, component of a multi-subunit COQ enzyme complex, composed of at least COQ3, COQ4, COQ5, COQ6, COQ7 and COQ9. Requires Zn(2+) as cofactor.

Its subcellular location is the mitochondrion inner membrane. It carries out the reaction a 4-hydroxy-3-methoxy-5-(all-trans-polyprenyl)benzoate + H(+) = a 2-methoxy-6-(all-trans-polyprenyl)phenol + CO2. It participates in cofactor biosynthesis; ubiquinone biosynthesis. In terms of biological role, lyase that catalyzes the C1-decarboxylation of 4-hydroxy-3-methoxy-5-(all-trans-polyprenyl)benzoic acid into 2-methoxy-6-(all-trans-polyprenyl)phenol during ubiquinone biosynthesis. In Podospora anserina (strain S / ATCC MYA-4624 / DSM 980 / FGSC 10383) (Pleurage anserina), this protein is Ubiquinone biosynthesis protein COQ4, mitochondrial.